Reading from the N-terminus, the 1262-residue chain is Unconventional myosin-VI (1262 aa).

The 52-residue stretch at Glu-2–Glu-53 folds into the Myosin N-terminal SH3-like domain. One can recognise a Myosin motor domain in the interval Lys-57–Lys-771. Gly-151–Thr-158 provides a ligand contact to ATP. Phosphoserine is present on Ser-267. The tract at residues Tyr-273–Phe-317 is responsible for slow ATPase activity. The residue at position 405 (Thr-405) is a Phosphothreonine. The residue at position 604 (Ser-604) is a Phosphoserine. Actin-binding regions lie at residues Leu-651 to Leu-673 and Phe-665 to Asn-672. The tract at residues Lys-782 to Ile-810 is required for binding calmodulin. In terms of domain architecture, IQ spans Ala-814 to Lys-834. The segment at Pro-835 to Lys-916 is three-helix bundle. Residues Lys-864 to Glu-984 are a coiled coil. Residues Lys-917–Glu-984 are SAH. The disordered stretch occupies residues Met-933–Arg-955. Ser-1025 bears the Phosphoserine mark. The segment at Leu-1034–Ala-1253 is interaction with TAX1BP1 and CALCOCO2/NDP52. Residues Arg-1084–Leu-1086 form an interaction with OPTN region. Ser-1123 bears the Phosphoserine mark. Residues Gln-1125 to Ala-1253 are interaction with TOM1.

This sequence belongs to the TRAFAC class myosin-kinesin ATPase superfamily. Myosin family. In terms of assembly, homodimer; dimerization seems to implicate the unfolding of the three-helix bundle region creating an additional calmodulin binding site, and cargo binding. Able to function as a monomer under specific conditions in vitro. Forms a complex with CFTR and DAB2 in the apical membrane of epithelial cells. Component of the DISP/DOCK7-induced septin displacement complex, at least composed of DOCK7, LRCH3 and MYO6. Binding to calmodulin through a unique insert, not found in other myosins, located in the neck region between the motor domain and the IQ domain appears to contribute to the directionality reversal. This interaction occurs only if the C-terminal lobe of calmodulin is occupied by calcium. Interaction with F-actin/ACTN1 occurs only at the apical brush border domain of the proximal tubule cells. Interacts with DAB2. In vitro, the C-terminal globular tail binds a C-terminal region of DAB2. Interacts with CFTR. Interacts with CABP5. Interacts (via residues 1128-1256) with TOM1 (via residues 392-463). Interacts (via residues 1060-1285) with OPTN. Interacts (via residues 1060-1285) with TAX1BP1 and CALCOCO2/NDP52. Interacts with TOM1L2. Interacts with CLIC5; may work together in a complex which also includes RDX and MYO6 to stabilize linkages between the plasma membrane and subjacent actin cytoskeleton at the base of stereocilia. Phosphorylation in the motor domain, induced by EGF, results in translocation of MYO6 from the cell surface to membrane ruffles and affects F-actin dynamics. Phosphorylated in vitro by p21-activated kinase (PAK). Within the cochlea, expressed specifically within the sensory hair cells (at protein level). Expressed in the inner and outer plexiform layer of the retina (at protein level). Widely expressed. Expressed in the brain, kidney, liver, and testis.

The protein resides in the golgi apparatus. Its subcellular location is the trans-Golgi network membrane. It localises to the nucleus. The protein localises to the cytoplasm. It is found in the perinuclear region. The protein resides in the membrane. Its subcellular location is the clathrin-coated pit. It localises to the cytoplasmic vesicle. The protein localises to the clathrin-coated vesicle. It is found in the cell projection. The protein resides in the filopodium. Its subcellular location is the ruffle membrane. It localises to the microvillus. The protein localises to the cytosol. In terms of biological role, myosins are actin-based motor molecules with ATPase activity. Unconventional myosins serve in intracellular movements. Myosin 6 is a reverse-direction motor protein that moves towards the minus-end of actin filaments. Has slow rate of actin-activated ADP release due to weak ATP binding. Functions in a variety of intracellular processes such as vesicular membrane trafficking and cell migration. Required for the structural integrity of the Golgi apparatus via the p53-dependent pro-survival pathway. Appears to be involved in a very early step of clathrin-mediated endocytosis in polarized epithelial cells. Together with TOM1, mediates delivery of endocytic cargo to autophagosomes thereby promoting autophagosome maturation and driving fusion with lysosomes. Links TOM1 with autophagy receptors, such as TAX1BP1; CALCOCO2/NDP52 and OPTN. May act as a regulator of F-actin dynamics. As part of the DISP complex, may regulate the association of septins with actin and thereby regulate the actin cytoskeleton. May play a role in transporting DAB2 from the plasma membrane to specific cellular targets. May play a role in the extension and network organization of neurites. Required for structural integrity of inner ear hair cells. Required for the correct localization of CLIC5 and RDX at the stereocilium base. Modulates RNA polymerase II-dependent transcription. The sequence is that of Unconventional myosin-VI (Myo6) from Mus musculus (Mouse).